A 237-amino-acid polypeptide reads, in one-letter code: Large ribosomal subunit protein uL1 (237 aa).

Belongs to the universal ribosomal protein uL1 family. In terms of assembly, part of the 50S ribosomal subunit.

Binds directly to 23S rRNA. The L1 stalk is quite mobile in the ribosome, and is involved in E site tRNA release. Functionally, protein L1 is also a translational repressor protein, it controls the translation of the L11 operon by binding to its mRNA. The polypeptide is Large ribosomal subunit protein uL1 (Rickettsia typhi (strain ATCC VR-144 / Wilmington)).